Here is a 451-residue protein sequence, read N- to C-terminus: UPF0210 protein lmo0534 (451 aa).

This sequence belongs to the UPF0210 family. In terms of assembly, homodimer.

This Listeria monocytogenes serovar 1/2a (strain ATCC BAA-679 / EGD-e) protein is UPF0210 protein lmo0534.